The sequence spans 348 residues: Ion-translocating oxidoreductase complex subunit D (348 aa).

Transmembrane regions (helical) follow at residues 25-45 (ILAA…GTFI), 68-88 (PISP…IGVA), and 124-144 (AMAA…TWAA). Thr182 is modified (FMN phosphoryl threonine). Helical transmembrane passes span 211–231 (TGEG…FLLA), 237–257 (WHIS…GFGA), 263–283 (ASPL…FIAT), 296–316 (LLFG…GGYP), and 317–337 (DGVA…DYYI).

The protein belongs to the NqrB/RnfD family. In terms of assembly, the complex is composed of six subunits: RnfA, RnfB, RnfC, RnfD, RnfE and RnfG. Requires FMN as cofactor.

It is found in the cell inner membrane. Part of a membrane-bound complex that couples electron transfer with translocation of ions across the membrane. This is Ion-translocating oxidoreductase complex subunit D from Shewanella amazonensis (strain ATCC BAA-1098 / SB2B).